The chain runs to 1365 residues: Patatin-like phospholipase domain-containing protein 6 (1365 aa).

Residues 1–50 (MGTSSHGLATNSSGAKVAERDGFQDVPAPGEGAAGRICGAQPVPFVPQVL) lie on the Lumenal side of the membrane. Residue Asn-11 is glycosylated (N-linked (GlcNAc...) asparagine). The helical transmembrane segment at 51-71 (GVMIGAGVAVVVTAVLILLVV) threads the bilayer. The Cytoplasmic portion of the chain corresponds to 72–1365 (RRLRVPKTPA…QEPPGSATDA (1294 aa)). 186–313 (VLGHFEKPLF…VRVVQIIMVR (128 aa)) is an a nucleoside 3',5'-cyclic phosphate binding site. Disordered regions lie at residues 343–427 (FPSP…RSDF) and 441–463 (QEGA…PREQ). Ser-345 carries the phosphoserine modification. Over residues 350 to 367 (TRTSPVRGSKRMVSTSAT) the composition is skewed to polar residues. Residue Thr-352 is modified to Phosphothreonine. Phosphoserine is present on residues Ser-353 and Ser-363. Over residues 375 to 389 (GRPPDPTGAPLPGPT) the composition is skewed to pro residues. Ser-411 is modified (phosphoserine). Phosphothreonine is present on Thr-455. A nucleoside 3',5'-cyclic phosphate contacts are provided by residues 502–624 (ELAK…VAAR) and 620–740 (TVAA…LSQK). One can recognise a PNPLA domain in the interval 971–1137 (LVLGGGGARG…INNLPADIAR (167 aa)). A GXGXXG motif is present at residues 975 to 980 (GGGARG). The short motif at 1002-1006 (GTSIG) is the GXSXG element. The active-site Nucleophile is the Ser-1004. Asp-1124 serves as the catalytic Proton acceptor. The DGA/G motif lies at 1124-1126 (DGG). Residues 1296–1365 (SYVSDGCADG…QEPPGSATDA (70 aa)) form a disordered region. Over residues 1303–1319 (ADGEESDCLTEYEEDAG) the composition is skewed to acidic residues.

The protein belongs to the NTE family. Post-translationally, glycosylated.

It is found in the endoplasmic reticulum membrane. The enzyme catalyses a 1-acyl-sn-glycero-3-phosphocholine + H2O = sn-glycerol 3-phosphocholine + a fatty acid + H(+). It carries out the reaction 1-hexadecanoyl-sn-glycero-3-phosphocholine + H2O = sn-glycerol 3-phosphocholine + hexadecanoate + H(+). It catalyses the reaction 1-(9Z-octadecenoyl)-sn-glycero-3-phosphocholine + H2O = sn-glycerol 3-phosphocholine + (9Z)-octadecenoate + H(+). The catalysed reaction is 1-hexadecanoylglycerol + H2O = glycerol + hexadecanoate + H(+). The enzyme catalyses 2-hexadecanoylglycerol + H2O = glycerol + hexadecanoate + H(+). It carries out the reaction 1-(9Z-octadecenoyl)-glycerol + H2O = glycerol + (9Z)-octadecenoate + H(+). It catalyses the reaction 2-(9Z-octadecenoyl)-glycerol + H2O = glycerol + (9Z)-octadecenoate + H(+). The catalysed reaction is 2-(5Z,8Z,11Z,14Z-eicosatetraenoyl)-glycerol + H2O = glycerol + (5Z,8Z,11Z,14Z)-eicosatetraenoate + H(+). The enzyme catalyses 1-hexadecanoyl-sn-glycero-3-phosphate + H2O = sn-glycerol 3-phosphate + hexadecanoate + H(+). Its activity is regulated as follows. Inhibited by a series a OPs such as mipafox (MPX), phenyl saligenin phosphate (PSP), phenyl dipentyl phosphinate (PDPP), diisopropyl fluorophosphate and paraoxon. Its function is as follows. Phospholipase B that deacylates intracellular phosphatidylcholine (PtdCho), generating glycerophosphocholine (GroPtdCho). This deacylation occurs at both sn-2 and sn-1 positions of PtdCho. Catalyzes the hydrolysis of several naturally occurring membrane-associated lipids. Hydrolyzes lysophospholipids and monoacylglycerols, preferring the 1-acyl to the 2-acyl isomer. Does not catalyze hydrolysis of di- or triacylglycerols or fatty acid amides. In Pongo abelii (Sumatran orangutan), this protein is Patatin-like phospholipase domain-containing protein 6 (PNPLA6).